Consider the following 277-residue polypeptide: Uracil phosphoribosyltransferase homolog (277 aa).

A disordered region spans residues 1–69 (MEAMPCHNQR…AAAPSPAAED (69 aa)). The segment covering 37-69 (AEPSEGSSSGSPSPDSSSGSNGAAAAPSPAAED) has biased composition (low complexity). GTP is bound by residues R101, R110, and 144–147 (EKGN). R154 lines the 5-phospho-alpha-D-ribose 1-diphosphate pocket. GTP contacts are provided by R171 and R200. 206 to 214 (YPILSTGNT) is a binding site for 5-phospho-alpha-D-ribose 1-diphosphate. Residue 267-269 (THF) participates in uracil binding.

The protein belongs to the UPRTase family.

Its subcellular location is the cytoplasm. The protein localises to the nucleus. The protein is Uracil phosphoribosyltransferase homolog (UPRT) of Gallus gallus (Chicken).